The following is a 218-amino-acid chain: Lactosylceramide 4-alpha-galactosyltransferase (218 aa).

The DXD motif motif lies at 57–59 (DTD).

Belongs to the glycosyltransferase 32 family.

The protein resides in the golgi apparatus membrane. It catalyses the reaction a beta-D-Gal-(1-&gt;4)-beta-D-Glc-(1&lt;-&gt;1)-Cer(d18:1(4E)) + UDP-alpha-D-galactose = a globoside Gb3Cer (d18:1(4E)) + UDP + H(+). The catalysed reaction is a beta-D-Gal-(1&lt;-&gt;1')-ceramide + UDP-alpha-D-galactose = alpha-D-Gal-(1-&gt;4)-beta-D-Gal-(1&lt;-&gt;1')-Cer + UDP + H(+). It functions in the pathway glycolipid biosynthesis. Catalyzes the transfer of galactose from UDP-alpha-D-galactose to lactosylceramide/beta-D-galactosyl-(1-&gt;4)-beta-D-glucosyl-(1&lt;-&gt;1)-ceramide(d18:1(4E)) to produce globotriaosylceramide/globoside Gb3Cer (d18:1(4E)). Also able to transfer galactose to galactosylceramide/beta-D-Gal-(1&lt;-&gt;1')-Cer. Globoside Gb3Cer is a glycosphingolipid of the globo serie, one of the major types of neutral root structures of glycosphingolipids, that constitute a significant portion of mammalian cell membranes. The polypeptide is Lactosylceramide 4-alpha-galactosyltransferase (A4GALT) (Pongo pygmaeus (Bornean orangutan)).